The chain runs to 551 residues: E3 SUMO-protein ligase CBX4 (551 aa).

Residues 11-69 (FAVESIEKKRIRKGRVEYLVKWRGWSPKYNTWEPEENILDPRLLIAFQNRERQEQLMGY) form the Chromo domain. Residues lysine 77, lysine 106, lysine 114, and lysine 125 each participate in a glycyl lysine isopeptide (Lys-Gly) (interchain with G-Cter in SUMO2) cross-link. Residues 125–152 (KKHHQYQPHSKERSGKPPPPGKSGKYYY) are disordered. An N6-acetyllysine; alternate modification is found at lysine 149. Residue lysine 149 forms a Glycyl lysine isopeptide (Lys-Gly) (interchain with G-Cter in SUMO2); alternate linkage. Residues lysine 157, lysine 167, and lysine 178 each participate in a glycyl lysine isopeptide (Lys-Gly) (interchain with G-Cter in SUMO2) cross-link. Residues 172–193 (QYQGGHKEAPSPTCPDLGTKSH) are disordered. Serine 182 is modified (phosphoserine). Residues lysine 191, lysine 205, lysine 212, lysine 223, lysine 249, lysine 268, lysine 278, and lysine 280 each participate in a glycyl lysine isopeptide (Lys-Gly) (interchain with G-Cter in SUMO2) cross-link. Residues 216–244 (GGAGAPGKGSEKGPPNGMTPAPKEAVTGN) are disordered. Composition is skewed to basic and acidic residues over residues 281-291 (SGEAAEGEARS), 298-310 (AAEE…DRTF), and 317-332 (SEEK…REEE). Disordered regions lie at residues 281 to 399 (SGEA…TVGL) and 430 to 451 (TPTC…PTAA). Residues lysine 321, lysine 353, and lysine 366 each participate in a glycyl lysine isopeptide (Lys-Gly) (interchain with G-Cter in SUMO2) cross-link. Positions 381–396 (PAHHHHHHHHHHHHHT) are enriched in basic residues. Residue serine 463 is modified to Phosphoserine. Lysine 490 participates in a covalent cross-link: Glycyl lysine isopeptide (Lys-Gly) (interchain with G-Cter in SUMO2); alternate. Lysine 490 participates in a covalent cross-link: Glycyl lysine isopeptide (Lys-Gly) (interchain with G-Cter in SUMO); alternate.

As to quaternary structure, interacts with SUV39H1 and HIPK2. Interacts with CSNK2B. Component of a PRC1-like complex. The composition of the PRC1 complex differs between the PRC1 complex in pluripotent embryonic stem cells containing RNF2, CBX7 and PCGF2, and the PRC1 complex in differentiating cells containing RNF2, CBX2, CBX4 and BMI1. Interacts with RNF2. Interacts (via chromodomain) with histone H3K9Me3 and single-stranded RNA (ssRNA). Interacts with CHTOP. May interact with H3C15 and H3C1. Interacts with PRDM1. Post-translationally, ubiquitinated. Ubiquitination regulates the function of the Polycomb group (PcG) multiprotein PRC1-like complex. Deubiquitinated by USP26. As to expression, expressed in embryoid bodies.

It localises to the nucleus. The protein resides in the nucleus speckle. It participates in protein modification; protein sumoylation. In terms of biological role, E3 SUMO-protein ligase that catalyzes sumoylation of target proteins by promoting the transfer of SUMO from the E2 enzyme to the substrate. Involved in the sumoylation of HNRNPK, a p53/TP53 transcriptional coactivator, hence indirectly regulates p53/TP53 transcriptional activation resulting in p21/CDKN1A expression. Its function is as follows. Component of a Polycomb group (PcG) multiprotein PRC1-like complex, a complex class required to maintain the transcriptionally repressive state of many genes, including Hox genes, throughout development. PcG PRC1 complex acts via chromatin remodeling and modification of histones; it mediates monoubiquitination of histone H2A 'Lys-119', rendering chromatin heritably changed in its expressibility. Binds to histone H3 trimethylated at 'Lys-9' (H3K9me3). Plays a role in the lineage differentiation of the germ layers in embryonic development. The chain is E3 SUMO-protein ligase CBX4 (Cbx4) from Mus musculus (Mouse).